The primary structure comprises 195 residues: MTDTATSAGKIQPRLKQKYKTEIAANLSKDFGFTNVHQVPGLVKIVVNMGMGEAARDGKVIDGAINDLTLITGQKPQVTKARKSIAQFKLREGQPIGAHVTLRGDRMWEFLDRLLSLALPRIRDFRGLSDKQFDGNGNYTFGLTEQSMFHEINQDRIDRVRGMDITVVTTAKNDEEGRALLKQLGFPFRSVEAAS.

The protein belongs to the universal ribosomal protein uL5 family. In terms of assembly, part of the 50S ribosomal subunit; part of the 5S rRNA/L5/L18/L25 subcomplex. Contacts the 5S rRNA and the P site tRNA. Forms a bridge to the 30S subunit in the 70S ribosome.

Functionally, this is one of the proteins that bind and probably mediate the attachment of the 5S RNA into the large ribosomal subunit, where it forms part of the central protuberance. In the 70S ribosome it contacts protein S13 of the 30S subunit (bridge B1b), connecting the 2 subunits; this bridge is implicated in subunit movement. Contacts the P site tRNA; the 5S rRNA and some of its associated proteins might help stabilize positioning of ribosome-bound tRNAs. The protein is Large ribosomal subunit protein uL5 of Leifsonia xyli subsp. xyli (strain CTCB07).